The following is a 131-amino-acid chain: Small ribosomal subunit protein uS8 (131 aa).

It belongs to the universal ribosomal protein uS8 family. As to quaternary structure, part of the 30S ribosomal subunit. Contacts proteins S5 and S12.

Functionally, one of the primary rRNA binding proteins, it binds directly to 16S rRNA central domain where it helps coordinate assembly of the platform of the 30S subunit. The sequence is that of Small ribosomal subunit protein uS8 from Nautilia profundicola (strain ATCC BAA-1463 / DSM 18972 / AmH).